Here is a 272-residue protein sequence, read N- to C-terminus: HMP-PP phosphatase (272 aa).

The Nucleophile role is filled by D8. Mg(2+)-binding residues include D8, D10, and D212.

This sequence belongs to the HAD-like hydrolase superfamily. Cof family. Requires Mg(2+) as cofactor.

It catalyses the reaction 4-amino-2-methyl-5-(diphosphooxymethyl)pyrimidine + H2O = 4-amino-2-methyl-5-(phosphooxymethyl)pyrimidine + phosphate + H(+). Its function is as follows. Catalyzes the hydrolysis of 4-amino-2-methyl-5-hydroxymethylpyrimidine pyrophosphate (HMP-PP) to 4-amino-2-methyl-5-hydroxymethylpyrimidine phosphate (HMP-P). The polypeptide is HMP-PP phosphatase (Escherichia coli O6:H1 (strain CFT073 / ATCC 700928 / UPEC)).